Reading from the N-terminus, the 170-residue chain is Protein GrpE (170 aa).

The segment at M1–L29 is disordered. Residues I10–E22 are compositionally biased toward acidic residues.

This sequence belongs to the GrpE family. In terms of assembly, homodimer.

The protein resides in the cytoplasm. In terms of biological role, participates actively in the response to hyperosmotic and heat shock by preventing the aggregation of stress-denatured proteins, in association with DnaK and GrpE. It is the nucleotide exchange factor for DnaK and may function as a thermosensor. Unfolded proteins bind initially to DnaJ; upon interaction with the DnaJ-bound protein, DnaK hydrolyzes its bound ATP, resulting in the formation of a stable complex. GrpE releases ADP from DnaK; ATP binding to DnaK triggers the release of the substrate protein, thus completing the reaction cycle. Several rounds of ATP-dependent interactions between DnaJ, DnaK and GrpE are required for fully efficient folding. The polypeptide is Protein GrpE (Streptococcus suis (strain 98HAH33)).